Reading from the N-terminus, the 671-residue chain is DNA ligase (671 aa).

Residues 32–36 (DAEYD), 81–82 (SL), and glutamate 113 contribute to the NAD(+) site. Catalysis depends on lysine 115, which acts as the N6-AMP-lysine intermediate. NAD(+) contacts are provided by arginine 136, glutamate 173, lysine 290, and lysine 314. Positions 408, 411, 426, and 432 each coordinate Zn(2+). The BRCT domain occupies 593-671 (EIDSPFAGKT…EAEMMRLLGE (79 aa)).

This sequence belongs to the NAD-dependent DNA ligase family. LigA subfamily. Mg(2+) is required as a cofactor. Mn(2+) serves as cofactor.

The enzyme catalyses NAD(+) + (deoxyribonucleotide)n-3'-hydroxyl + 5'-phospho-(deoxyribonucleotide)m = (deoxyribonucleotide)n+m + AMP + beta-nicotinamide D-nucleotide.. Its function is as follows. DNA ligase that catalyzes the formation of phosphodiester linkages between 5'-phosphoryl and 3'-hydroxyl groups in double-stranded DNA using NAD as a coenzyme and as the energy source for the reaction. It is essential for DNA replication and repair of damaged DNA. The chain is DNA ligase from Klebsiella pneumoniae subsp. pneumoniae (strain ATCC 700721 / MGH 78578).